The chain runs to 107 residues: CRISPR-associated endoribonuclease Cas2 (107 aa).

Asp-6 provides a ligand contact to Mg(2+).

The protein belongs to the CRISPR-associated endoribonuclease Cas2 protein family. In terms of assembly, homodimer, forms a heterotetramer with a Cas1 homodimer. Requires Mg(2+) as cofactor.

Its function is as follows. CRISPR (clustered regularly interspaced short palindromic repeat), is an adaptive immune system that provides protection against mobile genetic elements (viruses, transposable elements and conjugative plasmids). CRISPR clusters contain sequences complementary to antecedent mobile elements and target invading nucleic acids. CRISPR clusters are transcribed and processed into CRISPR RNA (crRNA). Functions as a ssRNA-specific endoribonuclease. Involved in the integration of spacer DNA into the CRISPR cassette. This is CRISPR-associated endoribonuclease Cas2 from Streptococcus mutans serotype c (strain NN2025).